The sequence spans 297 residues: Chelated iron transport system membrane protein YfeD (297 aa).

Transmembrane regions (helical) follow at residues Ala20–Leu40, Ile58–Phe78, Thr96–Ile116, Ile133–Leu153, Ile172–Val192, Ala197–Ile217, Met224–Phe244, and Gly248–Tyr268.

This sequence belongs to the ABC-3 integral membrane protein family.

Its subcellular location is the cell inner membrane. Part of an ATP-driven transport system YfeABCD for chelated iron. The chain is Chelated iron transport system membrane protein YfeD (yfeD) from Yersinia pestis.